A 130-amino-acid chain; its full sequence is Small ribosomal subunit protein uS11 (130 aa).

This sequence belongs to the universal ribosomal protein uS11 family. Part of the 30S ribosomal subunit. Interacts with proteins S7 and S18. Binds to IF-3.

Functionally, located on the platform of the 30S subunit, it bridges several disparate RNA helices of the 16S rRNA. Forms part of the Shine-Dalgarno cleft in the 70S ribosome. This Xanthomonas oryzae pv. oryzae (strain MAFF 311018) protein is Small ribosomal subunit protein uS11.